Here is a 466-residue protein sequence, read N- to C-terminus: Cytochrome P450 85A (466 aa).

Residues 2–22 (ALFMAILGVLVLLLCLCSALL) traverse the membrane as a helical segment. Heme is bound at residue Cys-414.

It belongs to the cytochrome P450 family. Requires heme as cofactor.

The protein localises to the membrane. Functionally, catalyzes the C6-oxidation step in brassinosteroids biosynthesis. The polypeptide is Cytochrome P450 85A (Phaseolus vulgaris (Kidney bean)).